Consider the following 703-residue polypeptide: Lethal(3)malignant brain tumor-like protein 2 (703 aa).

Residues 1–85 (MEKPRGTEEA…NNRSLDGSGS (85 aa)) form a disordered region. Serine 13 is modified (phosphoserine). Residues 15–25 (PMEEEEEDDLD) show a composition bias toward acidic residues. The span at 35–49 (SYNSSAGSESSSYLE) shows a compositional bias: low complexity. Residues 50 to 60 (ESSEAENEDRE) are compositionally biased toward acidic residues. Serine 67 carries the phosphoserine modification. The span at 73 to 82 (SSANNRSLDG) shows a compositional bias: polar residues. Residues 81-116 (DGSGSEPAVCEMCGIVGTREAFFSKTKRFCSVSCSR) form an FCS-type zinc finger. Positions 90, 93, 110, and 114 each coordinate Zn(2+). 4 MBT repeats span residues 179–283 (FDWG…LVPP), 291–391 (TDWK…IKMS), 397–500 (MSHH…LTPP), and 508–604 (FAWE…LQPP). Position 338 is a phosphoserine (serine 338). Lysine 405 is covalently cross-linked (Glycyl lysine isopeptide (Lys-Gly) (interchain with G-Cter in SUMO2)). The tract at residues 604 to 649 (PVSAEPNTPQKGKDTTKKKKKQFGKKRKRIPSAKTRPLRQGSKKPL) is disordered. The segment covering 619–634 (TKKKKKQFGKKRKRIP) has biased composition (basic residues). Residues lysine 647 and lysine 673 each participate in a glycyl lysine isopeptide (Lys-Gly) (interchain with G-Cter in SUMO2) cross-link. The segment at 675-703 (EHQDISSLDRSPSPQLPLPIESIKQERNN) is disordered. A phosphoserine mark is found at serine 681, serine 685, and serine 687. A Glycyl lysine isopeptide (Lys-Gly) (interchain with G-Cter in SUMO1); alternate cross-link involves residue lysine 698. Residue lysine 698 forms a Glycyl lysine isopeptide (Lys-Gly) (interchain with G-Cter in SUMO2); alternate linkage.

Part of the E2F6.com-1 complex in G0 phase composed of E2F6, MGA, MAX, TFDP1, CBX3, BAT8, EUHMTASE1, RING1, RNF2, MBLR, BAT8 and YAF2. Post-translationally, phosphorylated. As to expression, ubiquitous.

Its subcellular location is the nucleus. Its function is as follows. Putative Polycomb group (PcG) protein. PcG proteins maintain the transcriptionally repressive state of genes, probably via a modification of chromatin, rendering it heritably changed in its expressibility. Its association with a chromatin-remodeling complex suggests that it may contribute to prevent expression of genes that trigger the cell into mitosis. Binds to monomethylated and dimethylated 'Lys-20' on histone H4. Binds histone H3 peptides that are monomethylated or dimethylated on 'Lys-4', 'Lys-9' or 'Lys-27'. The polypeptide is Lethal(3)malignant brain tumor-like protein 2 (L3mbtl2) (Mus musculus (Mouse)).